Consider the following 92-residue polypeptide: Large ribosomal subunit protein eL31 (92 aa).

It belongs to the eukaryotic ribosomal protein eL31 family.

This is Large ribosomal subunit protein eL31 from Halorubrum lacusprofundi (strain ATCC 49239 / DSM 5036 / JCM 8891 / ACAM 34).